Here is a 339-residue protein sequence, read N- to C-terminus: GDP-fucose transporter 1 (339 aa).

8 helical membrane-spanning segments follow: residues 9–29 (SVRI…LVFL), 45–65 (LFVT…LSLL), 82–102 (LSVA…ITFN), 111–133 (VSFY…YVIL), 136–156 (STSY…LMGV), 165–185 (ISYS…LNAI), 209–229 (ACFL…VAHF), and 237–257 (FWLM…ITGL). Positions 319 to 339 (AHTIQASKDDKALQEDGQTKV) are disordered. Over residues 325–339 (SKDDKALQEDGQTKV) the composition is skewed to basic and acidic residues.

Belongs to the TPT transporter family. SLC35C subfamily.

The protein localises to the golgi apparatus membrane. It carries out the reaction GMP(out) + GDP-beta-L-fucose(in) = GMP(in) + GDP-beta-L-fucose(out). Antiporter specific for GDP-l-fucose and depending on the concomitant reverse transport of GMP. Involved in GDP-fucose import from the cytoplasm into the Golgi lumen. The sequence is that of GDP-fucose transporter 1 (slc35c1) from Nematostella vectensis (Starlet sea anemone).